We begin with the raw amino-acid sequence, 116 residues long: Small ribosomal subunit protein uS13m (116 aa).

Belongs to the universal ribosomal protein uS13 family. Part of the small ribosomal subunit.

Its subcellular location is the mitochondrion. Located at the top of the head of the small subunit, it contacts several helices of the 18S rRNA. The chain is Small ribosomal subunit protein uS13m (RPS13) from Nicotiana tabacum (Common tobacco).